The primary structure comprises 136 residues: Nucleoside diphosphate kinase (136 aa).

ATP contacts are provided by K10, F58, R86, T92, R104, and N114. H117 serves as the catalytic Pros-phosphohistidine intermediate.

The protein belongs to the NDK family. Homotetramer. Requires Mg(2+) as cofactor.

The protein localises to the cytoplasm. The enzyme catalyses a 2'-deoxyribonucleoside 5'-diphosphate + ATP = a 2'-deoxyribonucleoside 5'-triphosphate + ADP. It carries out the reaction a ribonucleoside 5'-diphosphate + ATP = a ribonucleoside 5'-triphosphate + ADP. Functionally, major role in the synthesis of nucleoside triphosphates other than ATP. The ATP gamma phosphate is transferred to the NDP beta phosphate via a ping-pong mechanism, using a phosphorylated active-site intermediate. This Saccharopolyspora erythraea (strain ATCC 11635 / DSM 40517 / JCM 4748 / NBRC 13426 / NCIMB 8594 / NRRL 2338) protein is Nucleoside diphosphate kinase.